The primary structure comprises 417 residues: Cysteate synthase (417 aa).

N6-(pyridoxal phosphate)lysine is present on K102. Pyridoxal 5'-phosphate contacts are provided by N128 and T380.

Belongs to the threonine synthase family. Cysteate synthase subfamily. As to quaternary structure, homotrimer. Requires pyridoxal 5'-phosphate as cofactor.

It carries out the reaction O-phospho-L-serine + sulfite + H(+) = L-cysteate + phosphate. It functions in the pathway cofactor biosynthesis; coenzyme M biosynthesis. Specifically catalyzes the beta-elimination of phosphate from L-phosphoserine and the beta-addition of sulfite to the dehydroalanine intermediate to produce L-cysteate. The chain is Cysteate synthase from Methanocella arvoryzae (strain DSM 22066 / NBRC 105507 / MRE50).